We begin with the raw amino-acid sequence, 363 residues long: Anhydro-N-acetylmuramic acid kinase (363 aa).

9-16 (GTSLDGID) contacts ATP.

The protein belongs to the anhydro-N-acetylmuramic acid kinase family.

It catalyses the reaction 1,6-anhydro-N-acetyl-beta-muramate + ATP + H2O = N-acetyl-D-muramate 6-phosphate + ADP + H(+). It participates in amino-sugar metabolism; 1,6-anhydro-N-acetylmuramate degradation. The protein operates within cell wall biogenesis; peptidoglycan recycling. Its function is as follows. Catalyzes the specific phosphorylation of 1,6-anhydro-N-acetylmuramic acid (anhMurNAc) with the simultaneous cleavage of the 1,6-anhydro ring, generating MurNAc-6-P. Is required for the utilization of anhMurNAc either imported from the medium or derived from its own cell wall murein, and thus plays a role in cell wall recycling. The polypeptide is Anhydro-N-acetylmuramic acid kinase (Nitrosomonas europaea (strain ATCC 19718 / CIP 103999 / KCTC 2705 / NBRC 14298)).